Consider the following 724-residue polypeptide: Catalase-peroxidase (724 aa).

Residues 98–226 (WHSAGTYRIA…LAAVMMGLIY (129 aa)) constitute a cross-link (tryptophyl-tyrosyl-methioninium (Trp-Tyr) (with M-252)). Catalysis depends on His-99, which acts as the Proton acceptor. A cross-link (tryptophyl-tyrosyl-methioninium (Tyr-Met) (with W-98)) is located at residues 226-252 (YVNPEGVDGNPDPLKTAQDMRVTFARM). Position 267 (His-267) interacts with heme b.

It belongs to the peroxidase family. Peroxidase/catalase subfamily. As to quaternary structure, homodimer or homotetramer. It depends on heme b as a cofactor. In terms of processing, formation of the three residue Trp-Tyr-Met cross-link is important for the catalase, but not the peroxidase activity of the enzyme.

It catalyses the reaction H2O2 + AH2 = A + 2 H2O. The catalysed reaction is 2 H2O2 = O2 + 2 H2O. Its function is as follows. Bifunctional enzyme with both catalase and broad-spectrum peroxidase activity. In Vibrio cholerae serotype O1 (strain ATCC 39315 / El Tor Inaba N16961), this protein is Catalase-peroxidase.